We begin with the raw amino-acid sequence, 204 residues long: Sec-independent protein translocase protein TatB (204 aa).

A helical transmembrane segment spans residues 1-21 (MFDIGFSELLLIFIVGLVVLG). Polar residues predominate over residues 154-166 (VVSSVDSIQNGQS). The segment at 154-204 (VVSSVDSIQNGQSDLELDAQAEVDRQLAAMMDKYAPPDDVAENPISTEKTS) is disordered.

It belongs to the TatB family. As to quaternary structure, the Tat system comprises two distinct complexes: a TatABC complex, containing multiple copies of TatA, TatB and TatC subunits, and a separate TatA complex, containing only TatA subunits. Substrates initially bind to the TatABC complex, which probably triggers association of the separate TatA complex to form the active translocon.

The protein resides in the cell inner membrane. Part of the twin-arginine translocation (Tat) system that transports large folded proteins containing a characteristic twin-arginine motif in their signal peptide across membranes. Together with TatC, TatB is part of a receptor directly interacting with Tat signal peptides. TatB may form an oligomeric binding site that transiently accommodates folded Tat precursor proteins before their translocation. This Mannheimia succiniciproducens (strain KCTC 0769BP / MBEL55E) protein is Sec-independent protein translocase protein TatB.